We begin with the raw amino-acid sequence, 278 residues long: Shikimate dehydrogenase (NADP(+)) (278 aa).

Residues 19 to 21 and threonine 66 each bind shikimate; that span reads SLS. Lysine 70 acts as the Proton acceptor in catalysis. Residues asparagine 91 and aspartate 106 each contribute to the shikimate site. Residues 130-134, 152-157, and leucine 222 contribute to the NADP(+) site; these read GAGGS and NRTVEK. Tyrosine 224 contributes to the shikimate binding site. Glycine 245 is an NADP(+) binding site.

Belongs to the shikimate dehydrogenase family. As to quaternary structure, homodimer.

It catalyses the reaction shikimate + NADP(+) = 3-dehydroshikimate + NADPH + H(+). The protein operates within metabolic intermediate biosynthesis; chorismate biosynthesis; chorismate from D-erythrose 4-phosphate and phosphoenolpyruvate: step 4/7. In terms of biological role, involved in the biosynthesis of the chorismate, which leads to the biosynthesis of aromatic amino acids. Catalyzes the reversible NADPH linked reduction of 3-dehydroshikimate (DHSA) to yield shikimate (SA). In Methanococcus aeolicus (strain ATCC BAA-1280 / DSM 17508 / OCM 812 / Nankai-3), this protein is Shikimate dehydrogenase (NADP(+)).